Here is a 198-residue protein sequence, read N- to C-terminus: MSTPRVLPQSKETLLQNYNKRLKDDIRSILDNFTEIIKTAKVEDETQVSRATQAEQDHFEMHVRAANIVRAGESLMKLVSDLKQFLILNDFPSVNEAISLRNQQLRTLQEECDKKLISLRDEIAIDLYELEEEYYSSSCGQWDGVELPLCEAFHRQDSWGSPEMTSDPSHANHEVSDHLGSQESMQRHRNGSGTSEQS.

The tract at residues W159–S198 is disordered.

Belongs to the Mediator complex subunit 22 family. Component of the Mediator complex.

It is found in the nucleus. In terms of biological role, component of the Mediator complex, a coactivator involved in the regulated transcription of nearly all RNA polymerase II-dependent genes. Mediator functions as a bridge to convey information from gene-specific regulatory proteins to the basal RNA polymerase II transcription machinery. Mediator is recruited to promoters by direct interactions with regulatory proteins and serves as a scaffold for the assembly of a functional preinitiation complex with RNA polymerase II and the general transcription factors. This chain is Mediator of RNA polymerase II transcription subunit 22 (med22), found in Danio rerio (Zebrafish).